Consider the following 940-residue polypeptide: Valine--tRNA ligase (940 aa).

Residues 47–57 carry the 'HIGH' region motif; the sequence is PNVTGILHMGH. The short motif at 564–568 is the 'KMSKS' region element; sequence KLSKS. K567 contacts ATP. Positions 872-938 form a coiled coil; it reads PIEQITKEKN…LQSILDKLAS (67 aa).

It belongs to the class-I aminoacyl-tRNA synthetase family. ValS type 1 subfamily. As to quaternary structure, monomer.

It localises to the cytoplasm. It catalyses the reaction tRNA(Val) + L-valine + ATP = L-valyl-tRNA(Val) + AMP + diphosphate. Its function is as follows. Catalyzes the attachment of valine to tRNA(Val). As ValRS can inadvertently accommodate and process structurally similar amino acids such as threonine, to avoid such errors, it has a 'posttransfer' editing activity that hydrolyzes mischarged Thr-tRNA(Val) in a tRNA-dependent manner. This chain is Valine--tRNA ligase, found in Chlamydia felis (strain Fe/C-56) (Chlamydophila felis).